We begin with the raw amino-acid sequence, 55 residues long: MIDKKLLEILVCPLTKEKLEYNKDTNELISQKAKLAFPIRNGIPIMLVDEARKLE.

Belongs to the UPF0434 family.

The sequence is that of UPF0434 protein Erum1340/ERWE_CDS_01300 from Ehrlichia ruminantium (strain Welgevonden).